The primary structure comprises 412 residues: Multifunctional CCA protein (412 aa).

ATP contacts are provided by Gly8 and Arg11. CTP contacts are provided by Gly8 and Arg11. The Mg(2+) site is built by Glu21 and Asp23. Residues Arg91, Arg137, and Arg140 each contribute to the ATP site. CTP contacts are provided by Arg91, Arg137, and Arg140. Residues Cys228–Leu329 enclose the HD domain.

This sequence belongs to the tRNA nucleotidyltransferase/poly(A) polymerase family. Bacterial CCA-adding enzyme type 1 subfamily. Monomer. Can also form homodimers and oligomers. Requires Mg(2+) as cofactor. It depends on Ni(2+) as a cofactor.

The enzyme catalyses a tRNA precursor + 2 CTP + ATP = a tRNA with a 3' CCA end + 3 diphosphate. It catalyses the reaction a tRNA with a 3' CCA end + 2 CTP + ATP = a tRNA with a 3' CCACCA end + 3 diphosphate. Functionally, catalyzes the addition and repair of the essential 3'-terminal CCA sequence in tRNAs without using a nucleic acid template. Adds these three nucleotides in the order of C, C, and A to the tRNA nucleotide-73, using CTP and ATP as substrates and producing inorganic pyrophosphate. tRNA 3'-terminal CCA addition is required both for tRNA processing and repair. Also involved in tRNA surveillance by mediating tandem CCA addition to generate a CCACCA at the 3' terminus of unstable tRNAs. While stable tRNAs receive only 3'-terminal CCA, unstable tRNAs are marked with CCACCA and rapidly degraded. This is Multifunctional CCA protein from Acinetobacter baumannii (strain AB307-0294).